Reading from the N-terminus, the 239-residue chain is Metallo-beta-lactamase IND-1 (239 aa).

A signal peptide spans 1-20; sequence MKKSIRFFIVSILLSPFASA. 5 residues coordinate Zn(2+): His96, His98, Asp100, His159, and Cys178. An a beta-lactam-binding site is contributed by Lys181. His220 contributes to the Zn(2+) binding site.

This sequence belongs to the metallo-beta-lactamase superfamily. Class-B beta-lactamase family. Monomer. It depends on Zn(2+) as a cofactor.

The protein localises to the periplasm. The enzyme catalyses a beta-lactam + H2O = a substituted beta-amino acid. Its activity is regulated as follows. Inhibited by chelating agents such as EDTA. Not susceptible to inactivation by the beta-lactamase-blocking agent clavulanic acid. Its function is as follows. Class B beta-lactamase which confers resistance to the beta-lactam antibiotics, including penicillins, cephalosporins and carbapenems. Acts via hydrolysis of the beta-lactam ring. Has penicillin-, cephalosporin- and carbapenem-hydrolyzing activities. The protein is Metallo-beta-lactamase IND-1 of Chryseobacterium indologenes (Flavobacterium indologenes).